The chain runs to 250 residues: Ribosomal RNA small subunit methyltransferase J (250 aa).

Residues 96–97 and D168 contribute to the S-adenosyl-L-methionine site; that span reads RD.

It belongs to the methyltransferase superfamily. RsmJ family.

It is found in the cytoplasm. The catalysed reaction is guanosine(1516) in 16S rRNA + S-adenosyl-L-methionine = N(2)-methylguanosine(1516) in 16S rRNA + S-adenosyl-L-homocysteine + H(+). Functionally, specifically methylates the guanosine in position 1516 of 16S rRNA. This chain is Ribosomal RNA small subunit methyltransferase J, found in Neisseria gonorrhoeae (strain ATCC 700825 / FA 1090).